The sequence spans 116 residues: Ribosome-binding factor A (116 aa).

It belongs to the RbfA family. Monomer. Binds 30S ribosomal subunits, but not 50S ribosomal subunits or 70S ribosomes.

It localises to the cytoplasm. In terms of biological role, one of several proteins that assist in the late maturation steps of the functional core of the 30S ribosomal subunit. Associates with free 30S ribosomal subunits (but not with 30S subunits that are part of 70S ribosomes or polysomes). Required for efficient processing of 16S rRNA. May interact with the 5'-terminal helix region of 16S rRNA. The sequence is that of Ribosome-binding factor A from Clostridium botulinum (strain Alaska E43 / Type E3).